A 736-amino-acid chain; its full sequence is 1,4-alpha-glucan branching enzyme GlgB (736 aa).

Asp417 acts as the Nucleophile in catalysis. The active-site Proton donor is the Glu470.

It belongs to the glycosyl hydrolase 13 family. GlgB subfamily. In terms of assembly, monomer.

It catalyses the reaction Transfers a segment of a (1-&gt;4)-alpha-D-glucan chain to a primary hydroxy group in a similar glucan chain.. Its pathway is glycan biosynthesis; glycogen biosynthesis. Its function is as follows. Catalyzes the formation of the alpha-1,6-glucosidic linkages in glycogen by scission of a 1,4-alpha-linked oligosaccharide from growing alpha-1,4-glucan chains and the subsequent attachment of the oligosaccharide to the alpha-1,6 position. The chain is 1,4-alpha-glucan branching enzyme GlgB from Pseudomonas putida (strain ATCC 47054 / DSM 6125 / CFBP 8728 / NCIMB 11950 / KT2440).